The sequence spans 481 residues: Zinc metalloproteinase/disintegrin (481 aa).

Positions 1 to 20 (MIQVLLVTICLAVFPYQGSS) are cleaved as a signal peptide. Positions 21-190 (IILESGNVDD…KASQLYLTPE (170 aa)) are excised as a propeptide. The 196-residue stretch at 197–392 (RYIKLAIVVD…DNPQCILNAP (196 aa)) folds into the Peptidase M12B domain. 3 disulfides stabilise this stretch: cysteine 308-cysteine 387, cysteine 349-cysteine 371, and cysteine 351-cysteine 354. A Zn(2+)-binding site is contributed by histidine 333. Glutamate 334 is a catalytic residue. Zn(2+) contacts are provided by histidine 337 and histidine 343. Residues 393–408 (LRTDTVSTPVSGNEFL) constitute a propeptide that is removed on maturation. Residues 400–481 (TPVSGNEFLE…GDCPRNPFHA (82 aa)) enclose the Disintegrin domain. Cystine bridges form between cysteine 414-cysteine 429, cysteine 416-cysteine 424, cysteine 423-cysteine 446, cysteine 437-cysteine 443, cysteine 442-cysteine 467, and cysteine 455-cysteine 474. Positions 459–461 (RGD) match the Cell attachment site motif.

The protein belongs to the venom metalloproteinase (M12B) family. P-II subfamily. P-IIa sub-subfamily. In terms of assembly, monomer. Zn(2+) is required as a cofactor. As to expression, expressed by the venom gland.

The protein resides in the secreted. Its function is as follows. Impairs hemostasis in the envenomed animal. Disintegrin elegantin-2a-f: inhibits platelet aggregation induced by ADP, thrombin, platelet-activating factor and collagen. Acts by inhibiting fibrinogen interaction with platelet receptors GPIIb/GPIIIa (ITGA2B/ITGB3). The sequence is that of Zinc metalloproteinase/disintegrin from Protobothrops elegans (Elegant pitviper).